The primary structure comprises 501 residues: Glycerol kinase (501 aa).

An ADP-binding site is contributed by Thr17. Residues Thr17, Thr18, and Ser19 each coordinate ATP. Thr17 is a sn-glycerol 3-phosphate binding site. Arg21 contacts ADP. Residues Arg87, Glu88, Tyr139, and Asp243 each coordinate sn-glycerol 3-phosphate. Positions 87, 88, 139, 243, and 244 each coordinate glycerol. 2 residues coordinate ADP: Thr265 and Gly308. Residues Thr265, Gly308, Gln312, and Gly409 each coordinate ATP. Gly409 and Asn413 together coordinate ADP.

This sequence belongs to the FGGY kinase family.

The enzyme catalyses glycerol + ATP = sn-glycerol 3-phosphate + ADP + H(+). Its pathway is polyol metabolism; glycerol degradation via glycerol kinase pathway; sn-glycerol 3-phosphate from glycerol: step 1/1. Inhibited by fructose 1,6-bisphosphate (FBP). Functionally, key enzyme in the regulation of glycerol uptake and metabolism. Catalyzes the phosphorylation of glycerol to yield sn-glycerol 3-phosphate. This Pseudomonas syringae pv. tomato (strain ATCC BAA-871 / DC3000) protein is Glycerol kinase.